A 472-amino-acid chain; its full sequence is Alanine--anticapsin ligase (472 aa).

Residue Glu-109 coordinates Mg(2+). Lys-138 and Lys-178 together coordinate ATP. The 214-residue stretch at Arg-142–Cys-355 folds into the ATP-grasp domain. Position 182 (Leu-182) interacts with Mg(2+). ATP-binding positions include Ser-184–Ser-185, Glu-226–Leu-229, and Gln-268. Substrate is bound by residues Glu-273 and His-309 to Glu-311. 2 residues coordinate Mg(2+): Glu-311 and Glu-324. Residue Arg-328 to Gly-331 coordinates substrate.

In terms of assembly, monomer or homodimer. Mg(2+) serves as cofactor.

The enzyme catalyses L-anticapsin + L-alanine + ATP = bacilysin + ADP + phosphate + H(+). The protein operates within antibiotic biosynthesis; bacilysin biosynthesis. Functionally, part of the bacABCDEFG operon responsible for the biosynthesis of bacilysin, an irreversible inactivator of the glutaminase domain of glucosamine synthetase. Catalyzes the formation of alpha-dipeptides from various L-amino acids in the presence of ATP. In vivo catalyzes the ligation of L-alanine and L-anticapsin (epoxycyclohexanonyl-Ala) to produce the final bacilysin antibiotic (L-Ala-L-4S-cyclohexenonyl-Ala dipeptide). This chain is Alanine--anticapsin ligase, found in Bacillus amyloliquefaciens (Bacillus velezensis).